A 194-amino-acid polypeptide reads, in one-letter code: Histone H1 (194 aa).

An N-acetylalanine; partial modification is found at A1. The span at 1–14 (AEVAPAPAAAAPAK) shows a compositional bias: low complexity. Disordered regions lie at residues 1-31 (AEVA…GPAV) and 105-194 (AKKP…AAKK). Residues 15–26 (APKKKAAAKPKK) show a composition bias toward basic residues. Residues 27–100 (SGPAVGELAG…GASGSFKLNK (74 aa)) form the H15 domain. Residues 116-194 (KAKKVAAKKP…KVKKPAAAKK (79 aa)) are compositionally biased toward basic residues. A phosphoserine mark is found at S145, S161, and S182.

Belongs to the histone H1/H5 family.

It localises to the nucleus. It is found in the chromosome. In terms of biological role, histones H1 are necessary for the condensation of nucleosome chains into higher-order structures. The protein is Histone H1 of Salmo trutta (Brown trout).